The sequence spans 177 residues: Retrograde regulation protein 1 (177 aa).

A disordered region spans residues Met1–Arg24. The bHLH domain maps to Gly11–Leu96. Phosphoserine is present on residues Ser50 and Ser52. 2 disordered regions span residues Ser52 to Lys82 and Leu147 to Ser177. At Thr60 the chain carries Phosphothreonine. The span at Gly168–Ser177 shows a compositional bias: gly residues.

Binds DNA as a heterodimer with RTG3.

The protein localises to the nucleus. Required for a novel path of interorganelle communication between mitochondria, peroxisomes and the nucleus, thereby maintaining a functional metabolic interaction between the tricarboxylic acid and glyoxylate cycles. Transcription factor that regulates CIT2 gene expression. Binds to two identical sites oriented as inverted repeats 28 bp apart in a regulatory upstream activation sequence element (UASR) in the CIT2 promoter. The core binding site is 5'-GGTCAC-3'. In Saccharomyces cerevisiae (strain ATCC 204508 / S288c) (Baker's yeast), this protein is Retrograde regulation protein 1 (RTG1).